We begin with the raw amino-acid sequence, 73 residues long: Conotoxin ArMKLT2-022 (73 aa).

Residues 1-22 (MKLTCVLIIAVLFLTACQLTTG) form the signal peptide. A propeptide spanning residues 23–40 (EQKDHAQRSADRNSKLTR) is cleaved from the precursor. Pyrrolidone carboxylic acid is present on glutamine 41. Intrachain disulfides connect cysteine 42-cysteine 56, cysteine 49-cysteine 60, and cysteine 55-cysteine 67.

It belongs to the conotoxin O1 superfamily. Expressed by the venom duct.

The protein resides in the secreted. This Conus arenatus (Sand-dusted cone) protein is Conotoxin ArMKLT2-022.